Consider the following 160-residue polypeptide: SsrA-binding protein (160 aa).

Belongs to the SmpB family.

The protein localises to the cytoplasm. Functionally, required for rescue of stalled ribosomes mediated by trans-translation. Binds to transfer-messenger RNA (tmRNA), required for stable association of tmRNA with ribosomes. tmRNA and SmpB together mimic tRNA shape, replacing the anticodon stem-loop with SmpB. tmRNA is encoded by the ssrA gene; the 2 termini fold to resemble tRNA(Ala) and it encodes a 'tag peptide', a short internal open reading frame. During trans-translation Ala-aminoacylated tmRNA acts like a tRNA, entering the A-site of stalled ribosomes, displacing the stalled mRNA. The ribosome then switches to translate the ORF on the tmRNA; the nascent peptide is terminated with the 'tag peptide' encoded by the tmRNA and targeted for degradation. The ribosome is freed to recommence translation, which seems to be the essential function of trans-translation. This chain is SsrA-binding protein, found in Marinobacter nauticus (strain ATCC 700491 / DSM 11845 / VT8) (Marinobacter aquaeolei).